The sequence spans 594 residues: (-)-endo-fenchol synthase, chloroplastic (594 aa).

A chloroplast-targeting transit peptide spans 1–50 (MSSLVMHVGIVNKPAITYLPTLSRSASNLHNVSSTRLQTSCSLQLDYKPV). Positions 348, 352, 492, and 500 each coordinate Mg(2+). Residues 348–352 (DDIYD) carry the DDXXD motif motif.

The protein belongs to the terpene synthase family. Tpsa subfamily. Mg(2+) is required as a cofactor. Mn(2+) serves as cofactor. As to expression, expressed at high levels in leaves.

It is found in the plastid. It localises to the chloroplast. It carries out the reaction (2E)-geranyl diphosphate = alpha-pinene + diphosphate. The enzyme catalyses (2E)-geranyl diphosphate + H2O = (1S,2S,4R)-endo-fenchol + diphosphate. It catalyses the reaction (2E)-geranyl diphosphate = limonene + diphosphate. Its pathway is secondary metabolite biosynthesis; terpenoid biosynthesis. Monoterpene synthase involved in the biosynthesis of volatile compounds widely used in aromatherapy and folk medicine, and present in culinary herbs. Mediates the conversion of (2E)-geranyl diphosphate (GPP) into alpha fenchol, limonene and alpha-pinene and, as minor compounds, into beta-myrcene, alpha-terpinolene and alpha-phellandrene. The sequence is that of (-)-endo-fenchol synthase, chloroplastic from Lavandula pedunculata subsp. lusitanica (French lavender).